Reading from the N-terminus, the 407-residue chain is D-mannose isomerase (407 aa).

Catalysis depends on proton donor/acceptor residues His251 and His383.

Belongs to the N-acylglucosamine 2-epimerase family. As to quaternary structure, homodimer.

It catalyses the reaction D-mannose = D-fructose. The catalysed reaction is D-lyxose = D-xylulose. With respect to regulation, significantly inhibited by divalent metal ions such as Cu(2+), Cd(2+) or Ca(2+). Catalyzes the reversible isomerization of D-mannose to D-fructose. Shows weaker activity on D-lyxose, but cannot use N-acetyl D-glucosamine. The sequence is that of D-mannose isomerase from Thermobifida fusca (Thermomonospora fusca).